Consider the following 335-residue polypeptide: Hsp90 co-chaperone Cdc37-like 1 (335 aa).

Pro residues predominate over residues 1–11 (MEQPWPPPGPW). The segment at 1–42 (MEQPWPPPGPWSFPRTGGETEEESDLDVSPSSSHYSPVPDGG) is disordered. The segment at 2-170 (EQPWPPPGPW…YEQKIRHFGM (169 aa)) is self-association. The span at 27–40 (DVSPSSSHYSPVPD) shows a compositional bias: low complexity. Residues serine 32 and serine 88 each carry the phosphoserine modification. The stretch at 84–120 (HNSESLDQEHAKAQTAVSELRQREEEWRQKEEALVQR) forms a coiled coil. The self-association and interaction with Hsp90 stretch occupies residues 147–276 (KTEDEDKSQS…ARVRLYAQSQ (130 aa)). Residues 266 to 335 (KARVRLYAQS…EDDDRMMDTV (70 aa)) are interaction with Hsp70. A required for interaction with STIP1 region spans residues 277 to 335 (SFAPVTVENHAPHSGVGCIGSAEPLPQNPDSLQCCPPAPLCSVDSVVHKEDDDRMMDTV).

It belongs to the CDC37 family. In terms of assembly, self-associates. Forms complexes with Hsp70 and Hsp90. Interacts with CDC37, FKBP4, PPID and STIP1.

The protein resides in the cytoplasm. Co-chaperone that binds to numerous proteins and promotes their interaction with Hsp70 and Hsp90. The chain is Hsp90 co-chaperone Cdc37-like 1 (Cdc37l1) from Rattus norvegicus (Rat).